Consider the following 329-residue polypeptide: MIPRWQPASIPLLLHLDTLRCHHVSVQPPRATMTSLNIKEEDIPRLDGKVVVISGGASGIGLAAANIFARAGAKIFLFDCNPPDSGEAPENSTFIKADITSWAELKAAFAQAGHVDIAVANAGVSEEQPYFEDTFDEQGELKEPGFAVVDVNFKGTVMFTKLAVSYMRKQGKGGSVVITASATGYAPEQNLPVYSAIKSGLVGLVRSLRSTLPRFDISINAVAPAATITKLLPMDIAGPLMAAGLPVSSAHMVGLAVVYSAVARQPRMVETYGKENVLDLESKWNGRTILTLGEHYTELEEKLADLRPVWFGWRNTDLTKKQQATADFR.

NADP(+) is bound by residues Ser-58, Ile-60, and Asn-81. Asn-91 is a glycosylation site (N-linked (GlcNAc...) asparagine). The NADP(+) site is built by Asp-98, Asn-121, Lys-161, Tyr-194, Lys-198, and Thr-229. Catalysis depends on Tyr-194, which acts as the Proton acceptor. The Lowers pKa of active site Tyr role is filled by Lys-198. The chain crosses the membrane as a helical span at residues 238–258 (GPLMAAGLPVSSAHMVGLAVV).

Belongs to the short-chain dehydrogenases/reductases (SDR) family.

The protein resides in the membrane. It functions in the pathway sesquiterpene biosynthesis. In terms of biological role, short-chain dehydrogenase/reductase; part of the gene cluster that mediates the biosynthesis of PR-toxin, a bicyclic sesquiterpene belonging to the eremophilane class and acting as a mycotoxin. The first step of the pathway is catalyzed by the aristolochene synthase which performs the cyclization of trans,trans-farnesyl diphosphate (FPP) to the bicyclic sesquiterpene aristolochene. Following the formation of aristolochene, the non-oxygenated aristolochene is converted to the trioxygenated intermediate eremofortin B, via 7-epi-neopetasone. This conversion appears to involve three enzymes, a hydroxysterol oxidase-like enzyme, the quinone-oxidase prx3 that forms the quinone-type-structure in the bicyclic nucleus of aristolochene with the C8-oxo group and the C-3 hydroxyl group, and the P450 monooxygenase ORF6 that introduces the epoxide at the double bond between carbons 1 and 2. No monoxy or dioxy-intermediates have been reported to be released to the broth, so these three early oxidative reactions may be coupled together. Eremofortin B is further oxidized by another P450 monooxygenase, that introduces a second epoxide between carbons 7 and 11 prior to acetylation to eremofortin A by the acetyltransferase ORF8. The second epoxidation may be performed by a second P450 monooxygenase. After the acetylation step, eremofortin A is converted to eremofortin C and then to PR-toxin. First the conversion of eremofortin A to eremofortin C proceeds by oxidation of the side chain of the molecule at C-12 and is catalyzed by the short-chain oxidoreductase prx1. The cytochrome P450 monooxygenase ORF6 is probably also involved in this step. The primary alcohol formed at C-12 is finally oxidized by the short-chain alcohol dehydrogenase prx4 that forms PR-toxin. The protein is Short-chain dehydrogenase/reductase prx4 of Penicillium roqueforti.